A 547-amino-acid chain; its full sequence is MAKLIKHGSEGREQVLKGVDILADAVKVTLGPKGRNVLIEQSFGSPKITKDGVTVAKSIELKDKIRNAGAQLLKSAATKAAEVAGDGTTTATVLARALAREGNKLVAAGYNPMDLKRGMDLAVNAVVEEIKKSSKKINSQEEIAQVGTISSNGDKEIGEKIAKAMEEVGKEGVITVEEAKNFSFDVEVVKGMMFDRGYLSPYFVTNSEKMVAELENPFILLFEKKLSNLQPMLPILEAVVQSQRPLLIIAEDVEGEALATLVVNRLRGGLKVAAVKAPGFGDRRKAMMEDIAILTKGELITEDLGMKLENVSIKSLGTAKRVTISKENTVIVDGNGDKKNIEDRVLQIKSQIAETTSDYDKEKLQERLAKLSGGVAVLKVGGATEVEVKERKDRVEDALAATRAAVEEGVVAGGGVTLLHASQTLRNLKVDNKDQQAGIEIVIEALKDPLKQIVENAGENGGVVVGKLLEHKDKNYGFNAQDMQYVDMIKAGIIDPAKVVRTALQDAASVASLIITTETLIVDEPSDKEDSIPPMRGGMGGMGGMDF.

ATP contacts are provided by residues 29–32 (TLGP), Lys-50, 86–90 (DGTTT), Gly-414, and Asp-495. Residues 525–547 (PSDKEDSIPPMRGGMGGMGGMDF) form a disordered region. The segment covering 537 to 547 (GGMGGMGGMDF) has biased composition (gly residues).

Belongs to the chaperonin (HSP60) family. Forms a cylinder of 14 subunits composed of two heptameric rings stacked back-to-back. Interacts with the co-chaperonin GroES.

It localises to the cytoplasm. It carries out the reaction ATP + H2O + a folded polypeptide = ADP + phosphate + an unfolded polypeptide.. Its function is as follows. Together with its co-chaperonin GroES, plays an essential role in assisting protein folding. The GroEL-GroES system forms a nano-cage that allows encapsulation of the non-native substrate proteins and provides a physical environment optimized to promote and accelerate protein folding. The protein is Chaperonin GroEL of Rickettsia felis (strain ATCC VR-1525 / URRWXCal2) (Rickettsia azadi).